A 130-amino-acid polypeptide reads, in one-letter code: Small ribosomal subunit protein uS8 (130 aa).

The protein belongs to the universal ribosomal protein uS8 family. Part of the 30S ribosomal subunit.

Functionally, one of the primary rRNA binding proteins, it binds directly to 16S rRNA central domain where it helps coordinate assembly of the platform of the 30S subunit. The polypeptide is Small ribosomal subunit protein uS8 (Korarchaeum cryptofilum (strain OPF8)).